The sequence spans 177 residues: SsrA-binding protein (177 aa).

Disordered regions lie at residues 1-23 (MYVPKESQPKQGGGASGKVKDGK) and 148-177 (YDKRQTLREKQDRRESDRAIAAAKRKQRGE). The span at 148 to 165 (YDKRQTLREKQDRRESDR) shows a compositional bias: basic and acidic residues.

It belongs to the SmpB family.

Its subcellular location is the cytoplasm. Required for rescue of stalled ribosomes mediated by trans-translation. Binds to transfer-messenger RNA (tmRNA), required for stable association of tmRNA with ribosomes. tmRNA and SmpB together mimic tRNA shape, replacing the anticodon stem-loop with SmpB. tmRNA is encoded by the ssrA gene; the 2 termini fold to resemble tRNA(Ala) and it encodes a 'tag peptide', a short internal open reading frame. During trans-translation Ala-aminoacylated tmRNA acts like a tRNA, entering the A-site of stalled ribosomes, displacing the stalled mRNA. The ribosome then switches to translate the ORF on the tmRNA; the nascent peptide is terminated with the 'tag peptide' encoded by the tmRNA and targeted for degradation. The ribosome is freed to recommence translation, which seems to be the essential function of trans-translation. This is SsrA-binding protein from Streptomyces avermitilis (strain ATCC 31267 / DSM 46492 / JCM 5070 / NBRC 14893 / NCIMB 12804 / NRRL 8165 / MA-4680).